A 244-amino-acid chain; its full sequence is Nuclear protein UL4 homolog (244 aa).

The tract at residues 193 to 227 is disordered; it reads RPDDQTTPTPTPHQYTSQRRQPETNCPSSPQPAFF. Residues 205–220 are compositionally biased toward polar residues; that stretch reads HQYTSQRRQPETNCPS.

This sequence belongs to the alphaherpesvirinae HHV-1 UL4 family.

It is found in the host nucleus. This chain is Nuclear protein UL4 homolog, found in Varicella-zoster virus (strain Dumas) (HHV-3).